A 298-amino-acid polypeptide reads, in one-letter code: Small ribosomal subunit protein uS2 (298 aa).

The interval 240-298 (AGENWDTQAPGAGVPGSAFAAASAAAATSWEADGGDWAASSAPPAGESWAETQPTEAKW) is disordered. The segment covering 248-271 (APGAGVPGSAFAAASAAAATSWEA) has biased composition (low complexity). Residues 289-298 (AETQPTEAKW) show a composition bias toward polar residues.

Belongs to the universal ribosomal protein uS2 family. As to quaternary structure, component of the small ribosomal subunit. Mature ribosomes consist of a small (40S) and a large (60S) subunit. The 40S subunit contains about 33 different proteins and 1 molecule of RNA (18S). The 60S subunit contains about 49 different proteins and 3 molecules of RNA (25S, 5.8S and 5S). Interacts with rps21.

It is found in the cytoplasm. Its function is as follows. Required for the assembly and/or stability of the 40S ribosomal subunit. Required for the processing of the 20S rRNA-precursor to mature 18S rRNA in a late step of the maturation of 40S ribosomal subunits. The polypeptide is Small ribosomal subunit protein uS2 (rps0) (Aspergillus clavatus (strain ATCC 1007 / CBS 513.65 / DSM 816 / NCTC 3887 / NRRL 1 / QM 1276 / 107)).